The chain runs to 197 residues: Nucleoside triphosphate pyrophosphatase (197 aa).

Asp-72 serves as the catalytic Proton acceptor.

This sequence belongs to the Maf family. A divalent metal cation serves as cofactor.

It is found in the cytoplasm. The catalysed reaction is a ribonucleoside 5'-triphosphate + H2O = a ribonucleoside 5'-phosphate + diphosphate + H(+). It catalyses the reaction a 2'-deoxyribonucleoside 5'-triphosphate + H2O = a 2'-deoxyribonucleoside 5'-phosphate + diphosphate + H(+). Nucleoside triphosphate pyrophosphatase. May have a dual role in cell division arrest and in preventing the incorporation of modified nucleotides into cellular nucleic acids. This Corynebacterium glutamicum (strain ATCC 13032 / DSM 20300 / JCM 1318 / BCRC 11384 / CCUG 27702 / LMG 3730 / NBRC 12168 / NCIMB 10025 / NRRL B-2784 / 534) protein is Nucleoside triphosphate pyrophosphatase.